The following is a 255-amino-acid chain: dTDP-3-amino-3,6-dideoxy-alpha-D-glucopyranose N,N-dimethyltransferase (255 aa).

Residues Y14, Y22, Y33, A58, 58 to 59 (AC), E79, 101 to 102 (DM), and M117 each bind S-adenosyl-L-methionine.

This sequence belongs to the methyltransferase TylM1/DesVI family. Homodimer.

The catalysed reaction is dTDP-3-amino-3,6-dideoxy-alpha-D-glucose + 2 S-adenosyl-L-methionine = dTDP-alpha-D-mycaminose + 2 S-adenosyl-L-homocysteine + 2 H(+). Its pathway is antibiotic biosynthesis; tylosin biosynthesis. Functionally, S-adenosyl-L-methionine-dependent methyltransferase involved in the biosynthesis of mycaminose, an essential structural component of the macrolide antibiotic tylosin. Involved in the last step in mycaminose biosynthesis by mediating dimethylation of the hexose C-3' amino group. The sequence is that of dTDP-3-amino-3,6-dideoxy-alpha-D-glucopyranose N,N-dimethyltransferase (tylM1) from Streptomyces fradiae (Streptomyces roseoflavus).